The following is a 156-amino-acid chain: Ribosome maturation factor RimP (156 aa).

This sequence belongs to the RimP family.

It localises to the cytoplasm. Required for maturation of 30S ribosomal subunits. In Prochlorococcus marinus (strain NATL2A), this protein is Ribosome maturation factor RimP.